Here is a 183-residue protein sequence, read N- to C-terminus: Holliday junction branch migration complex subunit RuvA (183 aa).

Residues 1-63 (MIVGLIGVVE…EDANLLYGFL (63 aa)) are domain I. The segment at 64–139 (EESEKILFER…FFIQDENRPA (76 aa)) is domain II. Residue Ala-139 is a region of interest, flexible linker. A domain III region spans residues 139-183 (ARNEVFLALESLGFKSAEINKVLKTLKPNLSIEAAIKEALQQLRS).

The protein belongs to the RuvA family. Homotetramer. Forms an RuvA(8)-RuvB(12)-Holliday junction (HJ) complex. HJ DNA is sandwiched between 2 RuvA tetramers; dsDNA enters through RuvA and exits via RuvB. An RuvB hexamer assembles on each DNA strand where it exits the tetramer. Each RuvB hexamer is contacted by two RuvA subunits (via domain III) on 2 adjacent RuvB subunits; this complex drives branch migration. In the full resolvosome a probable DNA-RuvA(4)-RuvB(12)-RuvC(2) complex forms which resolves the HJ.

Its subcellular location is the cytoplasm. In terms of biological role, the RuvA-RuvB-RuvC complex processes Holliday junction (HJ) DNA during genetic recombination and DNA repair, while the RuvA-RuvB complex plays an important role in the rescue of blocked DNA replication forks via replication fork reversal (RFR). RuvA specifically binds to HJ cruciform DNA, conferring on it an open structure. The RuvB hexamer acts as an ATP-dependent pump, pulling dsDNA into and through the RuvAB complex. HJ branch migration allows RuvC to scan DNA until it finds its consensus sequence, where it cleaves and resolves the cruciform DNA. This Helicobacter pylori (strain HPAG1) protein is Holliday junction branch migration complex subunit RuvA.